Here is a 440-residue protein sequence, read N- to C-terminus: D-serine dehydratase (440 aa).

An N6-(pyridoxal phosphate)lysine modification is found at Lys-116.

This sequence belongs to the serine/threonine dehydratase family. DsdA subfamily. As to quaternary structure, monomer. Pyridoxal 5'-phosphate serves as cofactor.

It carries out the reaction D-serine = pyruvate + NH4(+). This is D-serine dehydratase from Salmonella agona (strain SL483).